The sequence spans 431 residues: Histidine--tRNA ligase (431 aa).

The protein belongs to the class-II aminoacyl-tRNA synthetase family. In terms of assembly, homodimer.

Its subcellular location is the cytoplasm. The catalysed reaction is tRNA(His) + L-histidine + ATP = L-histidyl-tRNA(His) + AMP + diphosphate + H(+). The sequence is that of Histidine--tRNA ligase from Levilactobacillus brevis (strain ATCC 367 / BCRC 12310 / CIP 105137 / JCM 1170 / LMG 11437 / NCIMB 947 / NCTC 947) (Lactobacillus brevis).